The chain runs to 533 residues: 2-isopropylmalate synthase (533 aa).

One can recognise a Pyruvate carboxyltransferase domain in the interval 8-269; sequence IIIFDTTLRD…YYNPFLGRPA (262 aa). D17, H208, H210, and N244 together coordinate Mn(2+). Residues 408–533 are regulatory domain; that stretch reads RLELVQVSCG…VSANPAKASL (126 aa).

The protein belongs to the alpha-IPM synthase/homocitrate synthase family. LeuA type 1 subfamily. In terms of assembly, homodimer. It depends on Mn(2+) as a cofactor.

Its subcellular location is the cytoplasm. The catalysed reaction is 3-methyl-2-oxobutanoate + acetyl-CoA + H2O = (2S)-2-isopropylmalate + CoA + H(+). It participates in amino-acid biosynthesis; L-leucine biosynthesis; L-leucine from 3-methyl-2-oxobutanoate: step 1/4. In terms of biological role, catalyzes the condensation of the acetyl group of acetyl-CoA with 3-methyl-2-oxobutanoate (2-ketoisovalerate) to form 3-carboxy-3-hydroxy-4-methylpentanoate (2-isopropylmalate). The protein is 2-isopropylmalate synthase of Picosynechococcus sp. (strain ATCC 27264 / PCC 7002 / PR-6) (Agmenellum quadruplicatum).